A 354-amino-acid polypeptide reads, in one-letter code: Guanine nucleotide-binding protein G(i) subunit alpha-3 (354 aa).

Gly2 carries N-myristoyl glycine lipidation. Cys3 carries the S-palmitoyl cysteine lipid modification. Residues Lys32–Tyr354 form the G-alpha domain. The tract at residues Lys35–Thr48 is G1 motif. Residues Gly42, Glu43, Ser44, Gly45, Lys46, Ser47, Thr48, Asp150, Ser151, Leu175, Arg176, Thr177, Arg178, Val179, Lys180, Thr181, Val201, Gly203, Asn269, Lys270, Asp272, Leu273, Cys325, Ala326, and Thr327 each contribute to the GTP site. Position 47 (Ser47) interacts with Mg(2+). The segment at Asp173–Thr181 is G2 motif. Thr181 is a binding site for Mg(2+). The segment at Phe196–Arg205 is G3 motif. The interval Ile265–Asp272 is G4 motif. Residues Thr324–Thr329 are G5 motif.

Belongs to the G-alpha family. G(i/o/t/z) subfamily. In terms of assembly, heterotrimeric G proteins are composed of 3 units; alpha, beta and gamma. The alpha subunit contains the guanine nucleotide binding site. GTP binding causes dissociation of the heterotrimer, liberating the individual subunits so that they can interact with downstream effector proteins. Forms a complex with CCDC88A/GIV and EGFR which leads to enhanced EGFR signaling and triggering of cell migration; ligand stimulation is required for recruitment of GNAI3 to the complex. Interacts (inactive GDP-bound form) with CCDC88A/GIV (via GBA motif); the interaction leads to activation of GNAI3. Interacts (inactive GDP-bound form) with CCDC88C/DAPLE (via GBA motif); the interaction leads to activation of GNAI3. Interacts (inactive GDP-bound form) with NUCB1 (via GBA motif) and NUCB2 (via GBA motif); the interaction leads to activation of GNAI3. Interacts (inactive GDP-bound form) with PLCD4 (via GBA motif); the interaction leads to activation of GNAI3. Interacts with INSR; the interaction is probably mediated by CCDC88A/GIV. Interacts with GPSM1. Interacts (GDP-bound form) with GPSM2 (via GoLoco domains). Does not interact with RGS2. Interacts with RGS8 and RGS10; this strongly enhances the intrinsic GTPase activity. Interacts with RGS16; this strongly enhances the intrinsic GTPase activity. Interacts with RGS12. Interacts (via active GTP- or inactive GDP-bound form) with RGS14. Interacts (via active GTP-bound form) with TRPC5 (via ANK repeats) in a homotetrameric ion channel; the interaction is direct and activates the channel activity.

Its subcellular location is the cytoplasm. It localises to the cell membrane. The protein resides in the cytoskeleton. The protein localises to the microtubule organizing center. It is found in the centrosome. Its function is as follows. Heterotrimeric guanine nucleotide-binding proteins (G proteins) function as transducers downstream of G protein-coupled receptors (GPCRs) in numerous signaling cascades. The alpha chain contains the guanine nucleotide binding site and alternates between an active, GTP-bound state and an inactive, GDP-bound state. Signaling by an activated GPCR promotes GDP release and GTP binding. The alpha subunit has a low GTPase activity that converts bound GTP to GDP, thereby terminating the signal. Both GDP release and GTP hydrolysis are modulated by numerous regulatory proteins. Signaling is mediated via effector proteins, such as adenylate cyclase. Inhibits adenylate cyclase activity, leading to decreased intracellular cAMP levels. Stimulates the activity of receptor-regulated K(+) channels. The active GTP-bound form prevents the association of RGS14 with centrosomes and is required for the translocation of RGS14 from the cytoplasm to the plasma membrane. May play a role in cell division. The active GTP-bound form activates the calcium permeant TRPC5 ion channels. This Cricetulus griseus (Chinese hamster) protein is Guanine nucleotide-binding protein G(i) subunit alpha-3 (GNAI3).